The chain runs to 72 residues: Large ribosomal subunit protein bL31 (72 aa).

The protein belongs to the bacterial ribosomal protein bL31 family. Type A subfamily. Part of the 50S ribosomal subunit.

In terms of biological role, binds the 23S rRNA. The protein is Large ribosomal subunit protein bL31 of Rhodospirillum rubrum (strain ATCC 11170 / ATH 1.1.1 / DSM 467 / LMG 4362 / NCIMB 8255 / S1).